Here is a 303-residue protein sequence, read N- to C-terminus: Nod factor export ATP-binding protein I (303 aa).

Residues 5–235 (LQMRNVRKLY…EIGCDVVEVY (231 aa)) form the ABC transporter domain. 37 to 44 (GPNGAGKT) contacts ATP.

This sequence belongs to the ABC transporter superfamily. Lipooligosaccharide exporter (TC 3.A.1.102) family. The complex is composed of two ATP-binding proteins (NodI) and two transmembrane proteins (NodJ).

The protein resides in the cell inner membrane. Functionally, part of the ABC transporter complex NodIJ involved in the export of the nodulation factors (Nod factors), the bacterial signal molecules that induce symbiosis and subsequent nodulation induction. Nod factors are LCO (lipo-chitin oligosaccharide), a modified beta-1,4-linked N-acetylglucosamine oligosaccharide. This subunit is responsible for energy coupling to the transport system. The sequence is that of Nod factor export ATP-binding protein I from Cupriavidus metallidurans (strain ATCC 43123 / DSM 2839 / NBRC 102507 / CH34) (Ralstonia metallidurans).